We begin with the raw amino-acid sequence, 524 residues long: Na(+)/H(+) antiporter NhaG (524 aa).

A run of 11 helical transmembrane segments spans residues 6–26, 33–53, 59–79, 98–118, 126–146, 169–189, 193–213, 242–262, 283–303, 312–332, and 374–394; these read LHHI…ITAI, PYPI…IPLF, FITE…PALL, VLAL…SSMW, AAFV…LSIF, LAVV…DLGI, GLGL…GGVL, FLLA…AALI, FWDV…GLEI, WGLA…AVYI, and DILV…GLTI.

This sequence belongs to the monovalent cation:proton antiporter 1 (CPA1) transporter (TC 2.A.36) family.

Its subcellular location is the cell membrane. In terms of biological role, na(+)/H(+) antiporter that extrudes sodium in exchange for external protons. Can also transport lithium. The protein is Na(+)/H(+) antiporter NhaG (nhaG) of Bacillus atrophaeus.